Reading from the N-terminus, the 286-residue chain is Shikimate dehydrogenase (NADP(+)) (286 aa).

Residues S22 to S24 and T71 contribute to the shikimate site. K75 functions as the Proton acceptor in the catalytic mechanism. E87 is an NADP(+) binding site. The shikimate site is built by N96 and D111. NADP(+)-binding positions include G136 to A140, N160 to R165, and I225. Y227 contributes to the shikimate binding site. NADP(+) is bound at residue G248.

Belongs to the shikimate dehydrogenase family. As to quaternary structure, homodimer.

The enzyme catalyses shikimate + NADP(+) = 3-dehydroshikimate + NADPH + H(+). It functions in the pathway metabolic intermediate biosynthesis; chorismate biosynthesis; chorismate from D-erythrose 4-phosphate and phosphoenolpyruvate: step 4/7. Its function is as follows. Involved in the biosynthesis of the chorismate, which leads to the biosynthesis of aromatic amino acids. Catalyzes the reversible NADPH linked reduction of 3-dehydroshikimate (DHSA) to yield shikimate (SA). The protein is Shikimate dehydrogenase (NADP(+)) of Rhizobium rhizogenes (strain K84 / ATCC BAA-868) (Agrobacterium radiobacter).